Here is a 195-residue protein sequence, read N- to C-terminus: Inhibitor of glycogen debranching 1 (195 aa).

Residues 1 to 18 (MTDPHLNTPQVSTSPTFE) are compositionally biased toward polar residues. The segment at 1–101 (MTDPHLNTPQ…ERRSSGPMDF (101 aa)) is disordered. Ser-64 bears the Phosphoserine mark. Thr-65 bears the Phosphothreonine mark. Residues 75–95 (EQARERESSIGEHAPGAERRS) show a composition bias toward basic and acidic residues. Phosphoserine occurs at positions 95 and 96. Residue Thr-132 is modified to Phosphothreonine. The tract at residues 146–175 (NSYLDNNSNGNSARVPHGSPPQLGTRRKSS) is disordered. Residues 148 to 157 (YLDNNSNGNS) are compositionally biased toward polar residues. Residue Ser-164 is modified to Phosphoserine.

As to quaternary structure, interacts with GDB1.

The protein localises to the cytoplasm. In terms of biological role, acts as an inhibitor of GDB1, enhancing the ability of cells to store glucose as glycogen. In Saccharomyces cerevisiae (strain ATCC 204508 / S288c) (Baker's yeast), this protein is Inhibitor of glycogen debranching 1 (IGD1).